The sequence spans 82 residues: Small ribosomal subunit protein bS16 (82 aa).

Belongs to the bacterial ribosomal protein bS16 family.

The sequence is that of Small ribosomal subunit protein bS16 from Pseudoalteromonas translucida (strain TAC 125).